A 226-amino-acid polypeptide reads, in one-letter code: MSVVSNTSFEHALREGANALGLDLSEAQITQLLDFLALLQKWNKVYNLTAVRDPQEMLTHHLLDSLAAVPPLRRHVAQRGQDSAARPGARLLDVGSGGGLPGVVFAICCPEVDVSCVDTVAKKAAFIQQAAGTLGLSNLHGIHARVETLAGPFDVVSCRAFAALADFTAWSRQALAPHGVWLAMKGKHPHDEIAALPADVSVFHVEQLTVPGLQAERCILWLRPVA.

S-adenosyl-L-methionine is bound by residues Gly-95, Leu-100, 146-147, and Arg-159; that span reads VE.

It belongs to the methyltransferase superfamily. RNA methyltransferase RsmG family.

Its subcellular location is the cytoplasm. It carries out the reaction guanosine(527) in 16S rRNA + S-adenosyl-L-methionine = N(7)-methylguanosine(527) in 16S rRNA + S-adenosyl-L-homocysteine. Its function is as follows. Specifically methylates the N7 position of guanine in position 527 of 16S rRNA. This Acidovorax sp. (strain JS42) protein is Ribosomal RNA small subunit methyltransferase G.